Here is a 111-residue protein sequence, read N- to C-terminus: MICFKQQKITSLFVSLILLLTTILICWFCVLSPKVNGTNSPIEVNVYNPIPLAVMRGGIPLPGMPPVPTATPSLPRSGFTSSAKKIKESRKQKSTALQAVKDQYILRVARL.

The tract at residues 66–94 (PVPTATPSLPRSGFTSSAKKIKESRKQKS) is disordered. The span at 70-83 (ATPSLPRSGFTSSA) shows a compositional bias: polar residues.

It is found in the plastid. Its subcellular location is the chloroplast. This is an uncharacterized protein from Chlamydomonas reinhardtii (Chlamydomonas smithii).